Reading from the N-terminus, the 343-residue chain is Protein RecA (343 aa).

64 to 71 (GPESSGKT) contacts ATP.

Belongs to the RecA family.

Its subcellular location is the cytoplasm. Functionally, can catalyze the hydrolysis of ATP in the presence of single-stranded DNA, the ATP-dependent uptake of single-stranded DNA by duplex DNA, and the ATP-dependent hybridization of homologous single-stranded DNAs. It interacts with LexA causing its activation and leading to its autocatalytic cleavage. The polypeptide is Protein RecA (Bacillus cereus (strain ATCC 14579 / DSM 31 / CCUG 7414 / JCM 2152 / NBRC 15305 / NCIMB 9373 / NCTC 2599 / NRRL B-3711)).